The primary structure comprises 504 residues: MSQPRTPEQALDTPGDCPPGRRDEDAGEGIQCSQRMLSFSDALLSIIATVMILPVTHTEISPEQQFDRSVQRLLATRIAVYLMTFLIVTVAWAAHTRLFQVVGKTDDTLALLNLACMMTITFLPYTFSLMVTFPDVPLGIFLFCVCVIAIGVVQALIVGYAFHFPHLLSPQIQRSAHRALYRRHVLGIVLQGPALCFAAAIFSLFFVPLSYLLMVTVILLPYVSKVTGWCRDRLLGHREPSAHPVEVFSFDLHEPLSKERVEAFSDGVYAIVATLLILDICEDNVPDPKDVKERFSGSLVAALSATGPRFLAYFGSFATVGLLWFAHHSLFLHVRKATRAMGLLNTLSLAFVGGLPLAYQQTSAFARQPRDELERVRVSCTIIFLASIFQLAMWTTALLHQAETLQPSVWFGGREHVLMFAKLALYPCASLLAFASTCLLSRFSVGIFHLMQIAVPCAFLLLRLLVGLALATLRVLRGLARPEHPPPAPTGQDDPQSQLLPAPC.

Positions 1-27 (MSQPRTPEQALDTPGDCPPGRRDEDAG) are disordered. Over 1–33 (MSQPRTPEQALDTPGDCPPGRRDEDAGEGIQCS) the chain is Cytoplasmic. Threonine 6 bears the Phosphothreonine mark. A helical transmembrane segment spans residues 34 to 56 (QRMLSFSDALLSIIATVMILPVT). A RxxxFSD motif 1 motif is present at residues 35-41 (RMLSFSD). Residues 57–77 (HTEISPEQQFDRSVQRLLATR) are Lumenal-facing. Residues 58–63 (TEISPE) are short helix H1-1. The short helix H2-1 stretch occupies residues 65–71 (QFDRSVQ). Residues 78-100 (IAVYLMTFLIVTVAWAAHTRLFQ) form a helical membrane-spanning segment. Residues 101–106 (VVGKTD) are Cytoplasmic-facing. Residues 107–128 (DTLALLNLACMMTITFLPYTFS) traverse the membrane as a helical segment. Residues 129–138 (LMVTFPDVPL) lie on the Lumenal side of the membrane. Residues 139–160 (GIFLFCVCVIAIGVVQALIVGY) traverse the membrane as a helical segment. At 161–184 (AFHFPHLLSPQIQRSAHRALYRRH) the chain is on the cytoplasmic side. The chain crosses the membrane as a helical span at residues 185 to 205 (VLGIVLQGPALCFAAAIFSLF). Residues 206-210 (FVPLS) lie on the Lumenal side of the membrane. The chain crosses the membrane as a helical span at residues 211-230 (YLLMVTVILLPYVSKVTGWC). The Cytoplasmic segment spans residues 231–257 (RDRLLGHREPSAHPVEVFSFDLHEPLS). Residues 258-282 (KERVEAFSDGVYAIVATLLILDICE) form a helical membrane-spanning segment. Positions 260-266 (RVEAFSD) match the RxxxFSD motif 2 motif. The Lumenal segment spans residues 283-309 (DNVPDPKDVKERFSGSLVAALSATGPR). Residues 288–296 (PKDVKERFS) are short helix H1-2. The segment at 298 to 304 (SLVAALS) is short helix H2-2. The chain crosses the membrane as a helical span at residues 310–332 (FLAYFGSFATVGLLWFAHHSLFL). At 333–338 (HVRKAT) the chain is on the cytoplasmic side. Residues 339–360 (RAMGLLNTLSLAFVGGLPLAYQ) form a helical membrane-spanning segment. Residues 361-375 (QTSAFARQPRDELER) lie on the Lumenal side of the membrane. Residues 376–396 (VRVSCTIIFLASIFQLAMWTT) traverse the membrane as a helical segment. Residues 397 to 416 (ALLHQAETLQPSVWFGGREH) are Cytoplasmic-facing. Residues 417–440 (VLMFAKLALYPCASLLAFASTCLL) form a helical membrane-spanning segment. Topologically, residues 441–442 (SR) are lumenal. The chain crosses the membrane as a helical span at residues 443–469 (FSVGIFHLMQIAVPCAFLLLRLLVGLA). Residues 470-504 (LATLRVLRGLARPEHPPPAPTGQDDPQSQLLPAPC) lie on the Cytoplasmic side of the membrane. A disordered region spans residues 483 to 504 (EHPPPAPTGQDDPQSQLLPAPC). Residues 493–504 (DDPQSQLLPAPC) are compositionally biased toward polar residues.

It belongs to the TMEM175 family. Homodimer. Interacts with AKT (AKT1, AKT2 or AKT3); leading to formation of the lysoK(GF) complex, which activates the channel. Interacts with LAMP1; inhibiting the proton channel activity of TMEM175. Interacts with LAMP2; inhibiting the proton channel activity of TMEM175. As to expression, widely expressed.

It localises to the endosome membrane. It is found in the lysosome membrane. It catalyses the reaction H(+)(in) = H(+)(out). The enzyme catalyses K(+)(in) = K(+)(out). Its activity is regulated as follows. Active at low pH (under pH 4.6): proton channel activity is activated by luminal side protons. Polyunsaturated fatty acids, such as arachidonic acid, also activate the channel activity. Proton channel activity is directly inhibited by LAMP1 or LAMP2, facilitating lysosomal acidification. Channel activity is activated following interaction with AKT (AKT1, AKT2 or AKT3): interaction promotes activation from closed to an open state. Activation by AKT is independent of AKT serine/threonine-protein kinase activity. In terms of biological role, proton-activated proton channel that catalyzes proton efflux from endosomes and lysosomes to maintain a steady-state pH. Activated at low pH (under pH 4.6) by luminal side protons: selectively mediates lysosomal proton release from lysosomes, eliciting a proton leak that balances V-ATPase activity to maintain pH homeostasis. Regulation of lumenal pH stability is required for autophagosome-lysosome fusion. Also acts as a potassium channel at higher pH, regulating potassium conductance in endosomes and lysosomes. Constitutes the pore-forming subunit of the lysoK(GF) complex, a complex activated by extracellular growth factors. The lysoK(GF) complex is composed of TMEM175 and AKT (AKT1, AKT2 or AKT3), a major target of growth factor receptors: in the complex, TMEM175 channel is opened by conformational changes by AKT, leading to its activation. The lysoK(GF) complex is required to protect neurons against stress-induced damage. In Homo sapiens (Human), this protein is Endosomal/lysosomal proton channel TMEM175.